The primary structure comprises 554 residues: Glutamine--tRNA ligase (554 aa).

The 'HIGH' region signature appears at 34–44 (PEPNGYLHIGH). ATP is bound by residues 35–37 (EPN) and 41–47 (HIGHAKS). L-glutamine-binding residues include Asp-67 and Tyr-212. ATP contacts are provided by residues Thr-231, 261 to 262 (RL), and 269 to 271 (MSK). The 'KMSKS' region signature appears at 268–272 (VMSKR). Residues 317 to 324 (TKQDNTIE) form an interaction with tRNA region.

This sequence belongs to the class-I aminoacyl-tRNA synthetase family. Monomer.

It localises to the cytoplasm. The enzyme catalyses tRNA(Gln) + L-glutamine + ATP = L-glutaminyl-tRNA(Gln) + AMP + diphosphate. This chain is Glutamine--tRNA ligase, found in Shigella boydii serotype 18 (strain CDC 3083-94 / BS512).